The chain runs to 691 residues: Mediator of RNA polymerase II transcription subunit 17 (691 aa).

The stretch at 158–185 (KLESFDAAANKLLQSAQRLEEDIAAETK) forms a coiled coil.

Belongs to the Mediator complex subunit 17 family. Component of the Mediator complex.

Its subcellular location is the nucleus. In terms of biological role, component of the Mediator complex, a coactivator involved in the regulated transcription of nearly all RNA polymerase II-dependent genes. Mediator functions as a bridge to convey information from gene-specific regulatory proteins to the basal RNA polymerase II transcription machinery. Mediator is recruited to promoters by direct interactions with regulatory proteins and serves as a scaffold for the assembly of a functional preinitiation complex with RNA polymerase II and the general transcription factors. The sequence is that of Mediator of RNA polymerase II transcription subunit 17 (SRB4) from Coccidioides immitis (strain RS) (Valley fever fungus).